Consider the following 296-residue polypeptide: 4-hydroxy-tetrahydrodipicolinate synthase (296 aa).

Pyruvate is bound at residue T49. The active-site Proton donor/acceptor is Y137. Catalysis depends on K165, which acts as the Schiff-base intermediate with substrate. Residue I207 coordinates pyruvate.

The protein belongs to the DapA family. As to quaternary structure, homotetramer; dimer of dimers.

It localises to the cytoplasm. It carries out the reaction L-aspartate 4-semialdehyde + pyruvate = (2S,4S)-4-hydroxy-2,3,4,5-tetrahydrodipicolinate + H2O + H(+). It functions in the pathway amino-acid biosynthesis; L-lysine biosynthesis via DAP pathway; (S)-tetrahydrodipicolinate from L-aspartate: step 3/4. In terms of biological role, catalyzes the condensation of (S)-aspartate-beta-semialdehyde [(S)-ASA] and pyruvate to 4-hydroxy-tetrahydrodipicolinate (HTPA). This Bradyrhizobium diazoefficiens (strain JCM 10833 / BCRC 13528 / IAM 13628 / NBRC 14792 / USDA 110) protein is 4-hydroxy-tetrahydrodipicolinate synthase.